A 236-amino-acid chain; its full sequence is tRNA (guanine-N(7)-)-methyltransferase (236 aa).

Positions 1 to 23 (MEADVQRAQQAQLEKGSSVPPWT) are disordered. S-adenosyl-L-methionine is bound by residues D69, E94, N121, and D144. Residue D144 is part of the active site. 2 residues coordinate substrate: K148 and D180.

It belongs to the class I-like SAM-binding methyltransferase superfamily. TrmB family.

It carries out the reaction guanosine(46) in tRNA + S-adenosyl-L-methionine = N(7)-methylguanosine(46) in tRNA + S-adenosyl-L-homocysteine. It participates in tRNA modification; N(7)-methylguanine-tRNA biosynthesis. Functionally, catalyzes the formation of N(7)-methylguanine at position 46 (m7G46) in tRNA. The sequence is that of tRNA (guanine-N(7)-)-methyltransferase from Synechococcus sp. (strain JA-3-3Ab) (Cyanobacteria bacterium Yellowstone A-Prime).